The primary structure comprises 134 residues: ATP synthase epsilon chain, chloroplastic (134 aa).

The protein belongs to the ATPase epsilon chain family. In terms of assembly, F-type ATPases have 2 components, CF(1) - the catalytic core - and CF(0) - the membrane proton channel. CF(1) has five subunits: alpha(3), beta(3), gamma(1), delta(1), epsilon(1). CF(0) has three main subunits: a, b and c.

Its subcellular location is the plastid. The protein resides in the chloroplast thylakoid membrane. In terms of biological role, produces ATP from ADP in the presence of a proton gradient across the membrane. The chain is ATP synthase epsilon chain, chloroplastic from Phalaenopsis aphrodite subsp. formosana (Moth orchid).